We begin with the raw amino-acid sequence, 145 residues long: Transcription antitermination protein NusB (145 aa).

Belongs to the NusB family.

In terms of biological role, involved in transcription antitermination. Required for transcription of ribosomal RNA (rRNA) genes. Binds specifically to the boxA antiterminator sequence of the ribosomal RNA (rrn) operons. This is Transcription antitermination protein NusB from Geotalea daltonii (strain DSM 22248 / JCM 15807 / FRC-32) (Geobacter daltonii).